The primary structure comprises 168 residues: Putative flavin-containing monooxygenase FMO GS-OX-like 11 (168 aa).

17–22 (GAGAAG) contacts FAD.

This sequence belongs to the FMO family. Requires FAD as cofactor.

Functionally, catalyzes the conversion of methylthioalkyl glucosinolates of any chain length into methylsulfinylalkyl glucosinolates. This chain is Putative flavin-containing monooxygenase FMO GS-OX-like 11, found in Arabidopsis thaliana (Mouse-ear cress).